We begin with the raw amino-acid sequence, 232 residues long: Ribose-5-phosphate isomerase A (232 aa).

Residues 28–31, 83–86, and 96–99 each bind substrate; these read TGST, DGAD, and KGGG. Residue E105 is the Proton acceptor of the active site. K123 is a binding site for substrate.

The protein belongs to the ribose 5-phosphate isomerase family. As to quaternary structure, homodimer.

It carries out the reaction aldehydo-D-ribose 5-phosphate = D-ribulose 5-phosphate. It functions in the pathway carbohydrate degradation; pentose phosphate pathway; D-ribose 5-phosphate from D-ribulose 5-phosphate (non-oxidative stage): step 1/1. Its function is as follows. Catalyzes the reversible conversion of ribose-5-phosphate to ribulose 5-phosphate. This Rhodopseudomonas palustris (strain BisB18) protein is Ribose-5-phosphate isomerase A.